Here is a 662-residue protein sequence, read N- to C-terminus: Zinc finger protein 17 (662 aa).

The KRAB domain occupies 8–101 (MVFEDVAIHF…LLKDILHLAE (94 aa)). 16 C2H2-type zinc fingers span residues 190 to 212 (YSCTQCGKDFCHQHTLFEHQKIH), 218 to 240 (YECSECGKLFRYNSDLIKHQRNH), 246 to 268 (YKCSECGKAFSLKYNVVQHQKIH), 274 to 296 (YECSECGKAFLRKSHLLQHQRIH), 302 to 324 (YVCSECGKAFLTQAHLVGHQKIH), 358 to 380 (FYCCECGKFFMDSCTLIIHQRVH), 386 to 408 (YECNECGKFFRYRSTLIRHQKVH), 414 to 436 (YECSECGKFFMDTSTLIIHQRVH), 442 to 464 (YECNKCGKFFRYCFTLNRHQRVH), 470 to 492 (YECSECGKFFVDSCTLKSHQRVH), 498 to 520 (FECSICGKSFRCRSTLDTHQRIH), 526 to 548 (YECSECGKFFRHNSNHIRHRRNH), 554 to 576 (FECTECGRVFSQNSHLIRHQKVH), 582 to 604 (YKCSKCGKFFMDSSTLISHERVH), 610 to 632 (YECSECGKVFRYNSSLIKHRRIH), and 638 to 660 (YQCSECGRVFNQNSHLIQHQKVH).

Belongs to the krueppel C2H2-type zinc-finger protein family.

The protein localises to the nucleus. Its function is as follows. May be involved in transcriptional regulation. This Homo sapiens (Human) protein is Zinc finger protein 17 (ZNF17).